A 367-amino-acid polypeptide reads, in one-letter code: Phosphoribosylaminoimidazole-succinocarboxamide synthase (367 aa).

The protein belongs to the SAICAR synthetase family.

The enzyme catalyses 5-amino-1-(5-phospho-D-ribosyl)imidazole-4-carboxylate + L-aspartate + ATP = (2S)-2-[5-amino-1-(5-phospho-beta-D-ribosyl)imidazole-4-carboxamido]succinate + ADP + phosphate + 2 H(+). It participates in purine metabolism; IMP biosynthesis via de novo pathway; 5-amino-1-(5-phospho-D-ribosyl)imidazole-4-carboxamide from 5-amino-1-(5-phospho-D-ribosyl)imidazole-4-carboxylate: step 1/2. This chain is Phosphoribosylaminoimidazole-succinocarboxamide synthase, found in Shewanella piezotolerans (strain WP3 / JCM 13877).